The chain runs to 277 residues: Probable ABC transporter permease protein y4oR (277 aa).

7 consecutive transmembrane segments (helical) span residues 15-35 (LWTL…TWMV), 79-99 (VVTI…AYAL), 109-129 (LLVA…VPVY), 140-160 (TYQA…IWLM), 189-209 (IMMP…FIAV), 213-233 (FLFA…AMLG), and 242-262 (WDAV…FAFI). The ABC transmembrane type-1 domain occupies 74-263 (IINSAVVTIV…TPVIAFAFIM (190 aa)).

Belongs to the binding-protein-dependent transport system permease family. MalFG subfamily.

It is found in the cell inner membrane. In terms of biological role, probably part of the binding-protein-dependent transport system y4oPQRS. This system probably transports a sugar-like molecule. Probably responsible for the translocation of the substrate across the membrane. In Sinorhizobium fredii (strain NBRC 101917 / NGR234), this protein is Probable ABC transporter permease protein y4oR.